The sequence spans 71 residues: DNA gyrase inhibitor YacG (71 aa).

Residues Cys-7, Cys-10, Cys-26, and Cys-30 each contribute to the Zn(2+) site.

It belongs to the DNA gyrase inhibitor YacG family. In terms of assembly, interacts with GyrB. Requires Zn(2+) as cofactor.

In terms of biological role, inhibits all the catalytic activities of DNA gyrase by preventing its interaction with DNA. Acts by binding directly to the C-terminal domain of GyrB, which probably disrupts DNA binding by the gyrase. This chain is DNA gyrase inhibitor YacG, found in Shewanella amazonensis (strain ATCC BAA-1098 / SB2B).